A 79-amino-acid chain; its full sequence is Delta-hormotoxin-Cpt1b (79 aa).

The signal sequence occupies residues 1–20 (MKTQVLALFVLCVLFCLAES). Residues 21–31 (RTTLNKRNDIE) constitute a propeptide that is removed on maturation. Disulfide bonds link cysteine 36–cysteine 75, cysteine 38–cysteine 66, and cysteine 56–cysteine 76.

It belongs to the sea anemone sodium channel inhibitory toxin family.

It localises to the secreted. The protein localises to the nematocyst. In neuromuscular preparation of crustaceans, the toxin increased neurotransmitter release, causing repetitive firing of the axons. May affect sodium channels (Nav). In Calliactis parasitica (Sea anemone), this protein is Delta-hormotoxin-Cpt1b.